The chain runs to 621 residues: 1-deoxy-D-xylulose-5-phosphate synthase (621 aa).

Residues H80 and 121 to 123 contribute to the thiamine diphosphate site; that span reads GHS. D152 is a Mg(2+) binding site. Thiamine diphosphate-binding positions include 153-154, N181, Y288, and E370; that span reads GA. N181 serves as a coordination point for Mg(2+).

This sequence belongs to the transketolase family. DXPS subfamily. Homodimer. The cofactor is Mg(2+). It depends on thiamine diphosphate as a cofactor.

It carries out the reaction D-glyceraldehyde 3-phosphate + pyruvate + H(+) = 1-deoxy-D-xylulose 5-phosphate + CO2. It participates in metabolic intermediate biosynthesis; 1-deoxy-D-xylulose 5-phosphate biosynthesis; 1-deoxy-D-xylulose 5-phosphate from D-glyceraldehyde 3-phosphate and pyruvate: step 1/1. In terms of biological role, catalyzes the acyloin condensation reaction between C atoms 2 and 3 of pyruvate and glyceraldehyde 3-phosphate to yield 1-deoxy-D-xylulose-5-phosphate (DXP). The chain is 1-deoxy-D-xylulose-5-phosphate synthase from Shewanella frigidimarina (strain NCIMB 400).